We begin with the raw amino-acid sequence, 1887 residues long: Protein TIC 214 (1887 aa).

The next 6 helical transmembrane spans lie at 18–38 (IINS…FSIG), 64–84 (FITG…HLAL), 87–107 (PHTI…WNNH), 124–144 (LSIQ…HFIL), 172–192 (VGWL…LVWI), and 221–241 (IFSI…PSPI). Disordered stretches follow at residues 248–300 (EASK…EGWD), 785–805 (REEQ…DNKR), and 1569–1603 (LPSN…NLSP). A compositionally biased stretch (acidic residues) spans 256–268 (VESEEERDVEIET). Positions 1578 to 1597 (RSQETKEPPSQRERGSDIEN) are enriched in basic and acidic residues.

It belongs to the TIC214 family. Part of the Tic complex.

It is found in the plastid. Its subcellular location is the chloroplast inner membrane. Involved in protein precursor import into chloroplasts. May be part of an intermediate translocation complex acting as a protein-conducting channel at the inner envelope. The polypeptide is Protein TIC 214 (Solanum tuberosum (Potato)).